A 64-amino-acid chain; its full sequence is Large ribosomal subunit protein bL35 (64 aa).

The disordered stretch occupies residues 1–31 (MPKMKTHSGAKKRFKLTGTGKLKRQQANRRH).

This sequence belongs to the bacterial ribosomal protein bL35 family.

The protein is Large ribosomal subunit protein bL35 of Paenarthrobacter aurescens (strain TC1).